We begin with the raw amino-acid sequence, 275 residues long: MQNITDSWFVQGMIKATSDAWLKGWDERNGGNLTLRLDETDIAPFAANFHEKPRYIALSQPMPLLANTPFIVTGSGKFFRNVQLDPAANLGVVKIDSDGAGYHILWGLTHDAVPTSELPAHFLSHCERIKATHGKDRVIMHCHATNLIALTYVLENNTALITRKLWEGSTECLVVFPGGVGILPWMVPGTDEIGQATAQEMQKHSLVLWPFHGVFGSGPTLDETFGLIDTAEKSAEVLVKIYSMGGMKQTITREELVALGKRFGVTPLASAVALY.

E117 is an active-site residue. 3 residues coordinate Zn(2+): H141, H143, and H212.

It belongs to the aldolase class II family. RhaD subfamily. Homotetramer. The cofactor is Zn(2+).

The protein resides in the cytoplasm. It catalyses the reaction L-rhamnulose 1-phosphate = (S)-lactaldehyde + dihydroxyacetone phosphate. It participates in carbohydrate degradation; L-rhamnose degradation; glycerone phosphate from L-rhamnose: step 3/3. Catalyzes the reversible cleavage of L-rhamnulose-1-phosphate to dihydroxyacetone phosphate (DHAP) and L-lactaldehyde. The chain is Rhamnulose-1-phosphate aldolase from Salmonella paratyphi B (strain ATCC BAA-1250 / SPB7).